The following is a 1505-amino-acid chain: Probable serine/threonine-protein kinase irlD (1505 aa).

Positions Met-1 to Asn-18 are enriched in basic residues. Disordered regions lie at residues Met-1 to Gly-30, Ile-121 to Leu-211, Thr-548 to Asn-571, and Glu-862 to Thr-1013. The segment covering Ser-139–Ser-158 has biased composition (low complexity). A compositionally biased stretch (polar residues) spans Gly-159–Leu-172. Composition is skewed to low complexity over residues Asp-173 to Asn-209 and Thr-548 to Thr-561. Basic and acidic residues-rich tracts occupy residues Ile-562–Asn-571 and Glu-862–Lys-882. Positions Ile-846–Ile-892 form a coiled coil. Over residues Thr-896–Gln-924 the composition is skewed to low complexity. A compositionally biased stretch (pro residues) spans Thr-925 to Ile-943. 2 stretches are compositionally biased toward low complexity: residues Pro-944–Thr-954 and Thr-960–Lys-977. Residues Asn-978–Pro-989 are compositionally biased toward polar residues. The Protein kinase domain occupies Arg-1054–Phe-1324. Residues Ile-1060–Leu-1068 and Lys-1083 each bind ATP. Asp-1194 (proton acceptor) is an active-site residue. The KEN domain maps to His-1327–Lys-1505.

This sequence belongs to the protein kinase superfamily. Ser/Thr protein kinase family.

It catalyses the reaction L-seryl-[protein] + ATP = O-phospho-L-seryl-[protein] + ADP + H(+). It carries out the reaction L-threonyl-[protein] + ATP = O-phospho-L-threonyl-[protein] + ADP + H(+). This Dictyostelium discoideum (Social amoeba) protein is Probable serine/threonine-protein kinase irlD (irlD).